Here is a 279-residue protein sequence, read N- to C-terminus: Tryptophan 2,3-dioxygenase (279 aa).

Residues 48 to 52, Tyr110, and Arg114 each bind substrate; that span reads FIVIH. Residue His237 participates in heme binding. Thr251 provides a ligand contact to substrate.

This sequence belongs to the tryptophan 2,3-dioxygenase family. Homotetramer. Requires heme as cofactor.

The catalysed reaction is L-tryptophan + O2 = N-formyl-L-kynurenine. It functions in the pathway amino-acid degradation; L-tryptophan degradation via kynurenine pathway; L-kynurenine from L-tryptophan: step 1/2. Functionally, heme-dependent dioxygenase that catalyzes the oxidative cleavage of the L-tryptophan (L-Trp) pyrrole ring and converts L-tryptophan to N-formyl-L-kynurenine. Catalyzes the oxidative cleavage of the indole moiety. The polypeptide is Tryptophan 2,3-dioxygenase (Bacillus thuringiensis subsp. konkukian (strain 97-27)).